We begin with the raw amino-acid sequence, 426 residues long: Inhibin beta A chain (426 aa).

Positions 1 to 20 (MPLLWLRGFLLASCWIIVKS) are cleaved as a signal peptide. A propeptide spanning residues 21–310 (SPTPGSEGHS…EDHPHRRRRR (290 aa)) is cleaved from the precursor. N-linked (GlcNAc...) asparagine glycosylation is present at Asn165. Polar residues predominate over residues 177-186 (QQQKHPQGSS). Disordered regions lie at residues 177–201 (QQQK…MEER) and 260–291 (KKKK…SHRP). The segment covering 263 to 275 (KEEEGEGKKKDGG) has biased composition (basic and acidic residues). Disulfide bonds link Cys314–Cys322, Cys321–Cys391, Cys350–Cys423, and Cys354–Cys425.

Belongs to the TGF-beta family. In terms of assembly, dimeric, linked by one or more disulfide bonds. Inhibin A is a dimer of alpha/INHA and beta-A/INHBA. Activin A is a homodimer of beta-A/INHBA. Activin AB is a dimer of beta-A/INHBA and beta-B/INHBB. Interacts with FST and FSTL3; these interactions prevent activin A interaction to its type II receptor. Activin A interacts with ACVR2A. Activin A interacts with BMPR2. Inhibin A interacts with ACVR1; this interaction creates a non-signaling complex (NSC) that inhibits ACVR1-mediated BMP signaling. Inhibin A interacts with ACVR2A.

Its subcellular location is the secreted. In terms of biological role, inhibins/activins are involved in regulating a number of diverse functions such as hypothalamic and pituitary hormone secretion, gonadal hormone secretion, germ cell development and maturation, erythroid differentiation, insulin secretion, nerve cell survival, embryonic axial development or bone growth, depending on their subunit composition. Functionally, activin A is a homodimer of INHBA that plays a role in several essential biological processes including embryonic development, stem cell maintenance and differentiation, haematopoiesis, cell proliferation and tissue fibrosis. Signals through type I (such as ACVR1B or ACVR1C) and type II receptors (such as ACVR2A, ACVR2B or BMPR2) which, upon ligand binding, phosphorylate SMAD2 and SMAD3 intracellular signaling mediators that form a complex with SMAD4, translocate to the nucleus and modulate gene expression. Can also activate alternative non-canonical intracellular signaling pathways including the p38 MAPK, extracellular signal-regulated kinases 1/2 (ERK1/2) and c-Jun N-terminal kinases (JNKs) to modulate cell migration and differentiation. Alternatively, promotes osteoblastic differentiation via ACVRL1-SMAD1/5/9 pathway. In addition, can engage the type I receptor ACVR1 to form an ACVR1-activin A-type II receptor non-signaling complex (NSC) that renders receptors unavailable for engagement with BMPs, hence resulting in an apparent inhibition of ACVR1-mediated BMP signaling. Its function is as follows. Inhibin A is a dimer of alpha/INHA and beta-A/INHBA that functions as a feedback regulator in the hypothalamic-pituitary-gonadal (HPG) axis. Inhibits the secretion of FSH from the anterior pituitary gland by acting on pituitary gonadotrope cells. Antagonizes activin A by binding to the proteoglycan, betaglycan, and forming a stable complex with and, thereby, sequestering type II activin receptors while excluding type I receptor. The polypeptide is Inhibin beta A chain (INHBA) (Equus caballus (Horse)).